The sequence spans 540 residues: Chaperonin GroEL (540 aa).

ATP-binding positions include 29–32 (TLGP), 86–90 (DGTTT), G413, and D493. The tract at residues 520-540 (AEKPEPKPAPGPADPGAGMDF) is disordered.

It belongs to the chaperonin (HSP60) family. Forms a cylinder of 14 subunits composed of two heptameric rings stacked back-to-back. Interacts with the co-chaperonin GroES.

The protein localises to the cytoplasm. It catalyses the reaction ATP + H2O + a folded polypeptide = ADP + phosphate + an unfolded polypeptide.. Functionally, together with its co-chaperonin GroES, plays an essential role in assisting protein folding. The GroEL-GroES system forms a nano-cage that allows encapsulation of the non-native substrate proteins and provides a physical environment optimized to promote and accelerate protein folding. In Tropheryma whipplei (strain TW08/27) (Whipple's bacillus), this protein is Chaperonin GroEL.